The primary structure comprises 204 residues: Imidazoleglycerol-phosphate dehydratase (204 aa).

Belongs to the imidazoleglycerol-phosphate dehydratase family.

It is found in the cytoplasm. The enzyme catalyses D-erythro-1-(imidazol-4-yl)glycerol 3-phosphate = 3-(imidazol-4-yl)-2-oxopropyl phosphate + H2O. The protein operates within amino-acid biosynthesis; L-histidine biosynthesis; L-histidine from 5-phospho-alpha-D-ribose 1-diphosphate: step 6/9. The protein is Imidazoleglycerol-phosphate dehydratase of Corynebacterium urealyticum (strain ATCC 43042 / DSM 7109).